A 501-amino-acid chain; its full sequence is Leukocyte receptor cluster member 9 (501 aa).

Disordered regions lie at residues 1–43 (MGSR…PAPP), 61–86 (RQPHPGAPAPPGREAQPEAGAKKPPL), 203–234 (GQEAQAAPKRGSTRPLCTGHQEPGVEEPGELE), and 281–300 (QALGVPGGSAETTEAEWGPA). A C3H1-type zinc finger spans residues 40–67 (PAPPPACRFFLEGRCRFGARCRQPHPGA).

The sequence is that of Leukocyte receptor cluster member 9 (LENG9) from Homo sapiens (Human).